Consider the following 495-residue polypeptide: Putative FAD-containing monooxygenase MymA (495 aa).

FAD contacts are provided by residues serine 15, glutamate 36, tryptophan 45, 56 to 57 (DS), and valine 104.

This sequence belongs to the FAD-binding monooxygenase family. Requires FAD as cofactor.

Its function is as follows. Required for maintaining the appropriate mycolic acid composition and permeability of the envelope on its exposure to acidic pH. In Mycobacterium tuberculosis (strain CDC 1551 / Oshkosh), this protein is Putative FAD-containing monooxygenase MymA (mymA).